Reading from the N-terminus, the 368-residue chain is Epoxyqueuosine reductase QueH (368 aa).

Positions 6, 7, 87, and 90 each coordinate [4Fe-4S] cluster. Cysteine 174 and cysteine 176 form a disulfide bridge.

It belongs to the QueH family.

The enzyme catalyses epoxyqueuosine(34) in tRNA + AH2 = queuosine(34) in tRNA + A + H2O. Its pathway is tRNA modification; tRNA-queuosine biosynthesis. In terms of biological role, catalyzes the conversion of epoxyqueuosine (oQ) to queuosine (Q), which is a hypermodified base found in the wobble positions of tRNA(Asp), tRNA(Asn), tRNA(His) and tRNA(Tyr). This chain is Epoxyqueuosine reductase QueH, found in Helicobacter pylori (strain ATCC 700392 / 26695) (Campylobacter pylori).